We begin with the raw amino-acid sequence, 690 residues long: MKKPLRTSLLMLCLATPLAALAAGVDEAAIRATEQAGGEWLSHGRTYAEQRFSPLKQIDASNVRSLGLAWYMDLDNTRGLEATPLFHDGVIYTSMSWSRVIAVDAASGKELWRYDPEVAKVKARTSCCDAVNRGVALWGDKVYVGTLDGRLIALDAKTGKAIWSQQTTDPAKPYSITGAPRVVKGKVIIGNGGAEYGVRGFVSAYDADTGKLAWRFYTVPGDPALPYEHPELREAAKTWQGDQYWKLGGGGTVWDSMAYDPELDLLYVGTGNGSPWNREVRSPGGGDNLYLSSILAIRPDTGKLAWHYQVTPGDSWDFTATQQITLAELNIDGKPRKVLMQAPKNGFFYVLDRTNGKLISAEKFGKVTWAEKVDLATGRPVEAPGVRYEKEPIVMWPSPFGAHNWHSMSFNPGTGLVYIPYQEVPGVYRNEGKDFVTRKAFNTAAGFADATDVPAAVVSGALLAWDPVKQKAAWKVPYPTHWNGGTLSTAGNLVFQGTAAGQMHAYSADKGEALWQFEAQSGIVAAPMTFELAGRQYVAIMAGWGGVATLTGGESMNLPGMKNRSRLLVFALDGKAQLPPPAPAPAKVERVPQPVTAAPEQVQAGKQLYGQFCSVCHGMGTISGGLIPDLRQSSDATREHFQQIVLQGALKPLGMPSFDDSLKPEEVEQIKLYVMSREYEDYMARHKAAP.

An N-terminal signal peptide occupies residues 1-22 (MKKPLRTSLLMLCLATPLAALA). E81 lines the pyrroloquinoline quinone pocket. The cysteines at positions 127 and 128 are disulfide-linked. Pyrroloquinoline quinone contacts are provided by residues R133, T177, and 193–194 (GA). Residue E195 participates in Ca(2+) binding. T252 provides a ligand contact to pyrroloquinoline quinone. Residues N272 and D317 each coordinate Ca(2+). D317 functions as the Proton acceptor in the catalytic mechanism. Residues K344, 404–405 (NW), and V547 contribute to the pyrroloquinoline quinone site. The Cytochrome c domain occupies 600-678 (EQVQAGKQLY…QIKLYVMSRE (79 aa)). Residues C613, C616, H617, and M655 each contribute to the heme c site.

The protein belongs to the bacterial PQQ dehydrogenase family. In terms of assembly, monomer. Requires pyrroloquinoline quinone as cofactor. Ca(2+) is required as a cofactor. The cofactor is heme c.

Its subcellular location is the periplasm. The enzyme catalyses 2 oxidized [azurin] + a primary alcohol = 2 reduced [azurin] + an aldehyde + 2 H(+). Its activity is regulated as follows. Inhibited by 10 mM 1-butanol. Functionally, catalyzes the dye-linked oxidation of primary alcohols to the corresponding aldehydes and the (subsequent) oxidation of the aldehydes to carboxylic acids. Exhibits activity with longer mono-alcohols (C-4 to C-7) but not with methanol or glycerol. Reacts with 1,2-propanediol and 1,3-propanediol but not with sugar alcohols such as D-sorbitol. This is Quinohemoprotein alcohol dehydrogenase ADH IIB from Pseudomonas putida (Arthrobacter siderocapsulatus).